Here is a 245-residue protein sequence, read N- to C-terminus: Demethylmenaquinone methyltransferase (245 aa).

S-adenosyl-L-methionine is bound by residues Thr70, Asp90, and Asp118–Cys119.

This sequence belongs to the class I-like SAM-binding methyltransferase superfamily. MenG/UbiE family.

It carries out the reaction a 2-demethylmenaquinol + S-adenosyl-L-methionine = a menaquinol + S-adenosyl-L-homocysteine + H(+). It functions in the pathway quinol/quinone metabolism; menaquinone biosynthesis; menaquinol from 1,4-dihydroxy-2-naphthoate: step 2/2. Its function is as follows. Methyltransferase required for the conversion of demethylmenaquinol (DMKH2) to menaquinol (MKH2). The sequence is that of Demethylmenaquinone methyltransferase from Bacteroides fragilis (strain ATCC 25285 / DSM 2151 / CCUG 4856 / JCM 11019 / LMG 10263 / NCTC 9343 / Onslow / VPI 2553 / EN-2).